The sequence spans 214 residues: Probable transaldolase (214 aa).

Lys83 serves as the catalytic Schiff-base intermediate with substrate.

The protein belongs to the transaldolase family. Type 3B subfamily.

Its subcellular location is the cytoplasm. The catalysed reaction is D-sedoheptulose 7-phosphate + D-glyceraldehyde 3-phosphate = D-erythrose 4-phosphate + beta-D-fructose 6-phosphate. The protein operates within carbohydrate degradation; pentose phosphate pathway; D-glyceraldehyde 3-phosphate and beta-D-fructose 6-phosphate from D-ribose 5-phosphate and D-xylulose 5-phosphate (non-oxidative stage): step 2/3. Its function is as follows. Transaldolase is important for the balance of metabolites in the pentose-phosphate pathway. This chain is Probable transaldolase, found in Streptococcus equi subsp. equi (strain 4047).